We begin with the raw amino-acid sequence, 198 residues long: Dynein light chain Tctex-type protein 2 (198 aa).

The interval 1–34 (MEKRGRGVKSSPIQTPNQTPQQAPVTPRKERRPS) is disordered. Positions 11–24 (SPIQTPNQTPQQAP) are enriched in polar residues.

The protein belongs to the dynein light chain Tctex-type family. Interacts with CCDC159. Interacts with CSNK2B. As to expression, expressed predominantly in testis. Also expressed in brain, lung and trachea.

The protein resides in the cytoplasm. Its subcellular location is the cytoskeleton. The protein localises to the cytoplasmic granule. It localises to the membrane. In terms of biological role, may be an accessory component of axonemal dynein and cytoplasmic dynein 1. Candidate for involvement in male sterility. In Homo sapiens (Human), this protein is Dynein light chain Tctex-type protein 2.